The primary structure comprises 184 residues: MSGKLTIITGPMYSGKTTELLSFVEIYKLGKKKVAVFKPKIDSRYHSTMIVSHSGNGVEAHVIERPEEIRKYIEEDTRGVFIDEVQFFSPGLFEVVKDLLDRGIDVFCAGLDLTHKQNPFETTALLLSLADTVIKKKAVCHRCGEYNATLTLKVAGGEEEIDVGGQEKYIAVCRDCYNTLKKRV.

Residues 10-17 and 83-86 contribute to the ATP site; these read GPMYSGKT and DEVQ. Residue glutamate 84 is the Proton acceptor of the active site. Cysteine 140, cysteine 143, cysteine 173, and cysteine 176 together coordinate Zn(2+).

It belongs to the thymidine kinase family. As to quaternary structure, homotetramer.

The protein resides in the cytoplasm. The catalysed reaction is thymidine + ATP = dTMP + ADP + H(+). This chain is Thymidine kinase, found in Thermotoga petrophila (strain ATCC BAA-488 / DSM 13995 / JCM 10881 / RKU-1).